A 1000-amino-acid chain; its full sequence is Lysine-specific histone demethylase 1 (1000 aa).

The disordered stretch occupies residues 104–123 (RRPAGRRGRPALNTSNSLER). A coiled-coil region spans residues 107 to 137 (AGRRGRPALNTSNSLERNGTRYVSAEAPISV). The region spanning 153 to 249 (CYESAIASNL…YGCIYIISSL (97 aa)) is the SWIRM domain. FAD-binding positions include 260-302 (VAII…IYEA), Glu-301, and 328-329 (LA). The interval 279–950 (LFAQYEQDFL…RCESQPIPED (672 aa)) is demethylase activity. Positions 434-529 (IGWYISIEAF…ADMLNSLAST (96 aa)) form a coiled coil. The segment at 780–800 (TYGTKRNAQQALGKEGERENK) is disordered. Residues 841 to 921 (SRPSANPYLL…NYSTRLEEYQ (81 aa)) constitute a DNA-binding region (HMG box). 908–909 (AR) is a binding site for FAD. Basic and acidic residues predominate over residues 959–972 (EQEDEHLHPEKEGM). The tract at residues 959–1000 (EQEDEHLHPEKEGMSVENSDDDYHDDLDYEDSISEVFPDNFS) is disordered. Residues 976–991 (NSDDDYHDDLDYEDSI) are compositionally biased toward acidic residues.

This sequence belongs to the flavin monoamine oxidase family. Component of the SWM histone demethylase complex composed of at least lsd1, lsd2, phf1 and phf2. Interacts directly with lsd2. The cofactor is FAD.

The protein localises to the nucleus. Catalytic component of the SWM histone demethylase complex that specifically demethylates H3K9me2, a specific tag for epigenetic transcriptional activation, thereby acting as a corepressor. Acts by oxidizing the substrate by FAD to generate the corresponding imine that is subsequently hydrolyzed. Has a role in regulating heterochromatin propagation and euchromatic transcription. Also has a gene activating role. The polypeptide is Lysine-specific histone demethylase 1 (lsd1) (Schizosaccharomyces pombe (strain 972 / ATCC 24843) (Fission yeast)).